Reading from the N-terminus, the 361-residue chain is Chorismate synthase (361 aa).

Residues arginine 48 and arginine 54 each contribute to the NADP(+) site. FMN-binding positions include 125-127 (RSS), 238-239 (NA), glycine 278, 293-297 (KPTSS), and arginine 319.

It belongs to the chorismate synthase family. As to quaternary structure, homotetramer. The cofactor is FMNH2.

It catalyses the reaction 5-O-(1-carboxyvinyl)-3-phosphoshikimate = chorismate + phosphate. It functions in the pathway metabolic intermediate biosynthesis; chorismate biosynthesis; chorismate from D-erythrose 4-phosphate and phosphoenolpyruvate: step 7/7. Catalyzes the anti-1,4-elimination of the C-3 phosphate and the C-6 proR hydrogen from 5-enolpyruvylshikimate-3-phosphate (EPSP) to yield chorismate, which is the branch point compound that serves as the starting substrate for the three terminal pathways of aromatic amino acid biosynthesis. This reaction introduces a second double bond into the aromatic ring system. This chain is Chorismate synthase, found in Pectobacterium carotovorum subsp. carotovorum (strain PC1).